The primary structure comprises 162 residues: MATSKCYYPRPSHRFFTTDQHVTATSDFELDEWDLFNTGSDSSSSFSFSDLTITSGRTGTNRQIHGGSDSGKAASSLPVNVPDWSKILGDESRRQRKISNEEEVDGDEILCGEGTRRVPPHELLANRRMASFSVHEGAGRTLKGRDLSRVRNTIFKIRGIED.

This sequence belongs to the senescence regulator S40 family.

Its subcellular location is the cytoplasm. This Arabidopsis thaliana (Mouse-ear cress) protein is Protein S40-4.